The chain runs to 893 residues: UPF0182 protein CLD_0809 (893 aa).

The next 7 membrane-spanning stretches (helical) occupy residues 9–29, 49–69, 94–114, 154–174, 202–222, 246–266, and 273–293; these read IPLF…NFII, AIII…WMYY, LFFI…SSSY, VIIS…FILE, LAIV…IKIW, FYKI…LSIV, and VSIC…ASFL.

This sequence belongs to the UPF0182 family.

Its subcellular location is the cell membrane. In Clostridium botulinum (strain Okra / Type B1), this protein is UPF0182 protein CLD_0809.